A 185-amino-acid polypeptide reads, in one-letter code: Photosystem I assembly protein Ycf4 (185 aa).

2 helical membrane passes run 20–40 (GNFF…AVGA) and 57–77 (ILFF…LFIS).

It belongs to the Ycf4 family.

It localises to the plastid. The protein resides in the chloroplast thylakoid membrane. Its function is as follows. Seems to be required for the assembly of the photosystem I complex. This chain is Photosystem I assembly protein Ycf4, found in Oryza nivara (Indian wild rice).